Reading from the N-terminus, the 364-residue chain is MTTPLIEIRQIYKSYGNTPILNNVSLNVNHGEFLTLLGPSGCGKTTLLRLISGFEQPTQGEIFINGQCVNQLPPQKRDVHTVFQSYALFPHLSVFENVAFALRCKKTPNQEIRKRVFDALKLVQLESLAERNVKQLSGGQQQRVAIARAIINRPQVLLLDEPLSSLDYRLRKAMQSELKQLQKTLNMTFIFVTHDQEEALSMSDRIVVFNHGHIEQIGTPKAVYETPANLHVAMFIGEANIFDIQVHTVKDQDIITNIEGIQLSCKNTGNYQVNDRLHLIVRPEDIRVWSLSEVEKTEGMLPGRIVDIIYKGSTVDLKVELSSGKIINASEFFDEDDDKLEYTLHETVWVQWLPGWEVLLPYEG.

In terms of domain architecture, ABC transporter spans 6 to 236 (IEIRQIYKSY…PANLHVAMFI (231 aa)). 38–45 (GPSGCGKT) lines the ATP pocket.

This sequence belongs to the ABC transporter superfamily. Spermidine/putrescine importer (TC 3.A.1.11.1) family. The complex is composed of two ATP-binding proteins (PotA), two transmembrane proteins (PotB and PotC) and a solute-binding protein (PotD).

Its subcellular location is the cell inner membrane. It carries out the reaction ATP + H2O + polyamine-[polyamine-binding protein]Side 1 = ADP + phosphate + polyamineSide 2 + [polyamine-binding protein]Side 1.. Functionally, part of the ABC transporter complex PotABCD involved in spermidine/putrescine import. Responsible for energy coupling to the transport system. This chain is Spermidine/putrescine import ATP-binding protein PotA, found in Legionella pneumophila subsp. pneumophila (strain Philadelphia 1 / ATCC 33152 / DSM 7513).